Consider the following 116-residue polypeptide: UPF0102 protein IL0423 (116 aa).

This sequence belongs to the UPF0102 family.

The sequence is that of UPF0102 protein IL0423 from Idiomarina loihiensis (strain ATCC BAA-735 / DSM 15497 / L2-TR).